Reading from the N-terminus, the 323-residue chain is Pathogenicity locus probable regulatory protein WtsA (323 aa).

The region spanning 41–251 is the Sigma-54 factor interaction domain; that stretch reads VAPLEIDLVL…ELKTAAKRFT (211 aa). ATP contacts are provided by residues 52–59 and 123–132; these read GETGTGKD and EIDSMPLSLQ. The segment at residues 293-312 is a DNA-binding region (H-T-H motif); sequence IDEAAMELGMPLRTLYHRIK.

Its function is as follows. Positive activator of wtsB involved in plant pathogenicity. Probably interacts with sigma-54. The polypeptide is Pathogenicity locus probable regulatory protein WtsA (wtsA) (Pantoea stewartii subsp. stewartii (Erwinia stewartii)).